The primary structure comprises 317 residues: Cytochrome f (317 aa).

The N-terminal stretch at 1 to 34 (MKGLKNQIMKKTSLFICTLLFISSIVFHPKITFA) is a signal peptide. 4 residues coordinate heme: Y35, C55, C58, and H59. A helical transmembrane segment spans residues 284-304 (VIGLIAFFIGVGLTQILLVLK).

The protein belongs to the cytochrome f family. As to quaternary structure, the 4 large subunits of the cytochrome b6-f complex are cytochrome b6, subunit IV (17 kDa polypeptide, PetD), cytochrome f and the Rieske protein, while the 4 small subunits are PetG, PetL, PetM and PetN. The complex functions as a dimer. Requires heme as cofactor.

It localises to the cellular thylakoid membrane. Functionally, component of the cytochrome b6-f complex, which mediates electron transfer between photosystem II (PSII) and photosystem I (PSI), cyclic electron flow around PSI, and state transitions. This is Cytochrome f from Prochlorococcus marinus (strain MIT 9301).